A 347-amino-acid chain; its full sequence is NADH-ubiquinone oxidoreductase chain 2 (347 aa).

The next 11 membrane-spanning stretches (helical) occupy residues 3-23 (PIILIIILMTVMLGTIIVMIS), 25-45 (HWLLIWIGFEMNMLAIIPIMM), 67-87 (SMLLMMAIIINLMFSGQWTVM), 96-116 (MLMTMALAMKLGMAPFHFWVP), 122-142 (IPLSSGLILLTWQKLAPMSVL), 145-165 (ILPSINLDLILTLSILSITIG), 178-198 (IMAYSSIAHMGWMTAVLLYNP), 200-220 (MTLLNLIIYIIMTSTMFTLFM), 237-257 (APIMTILVLITLLSMGGLPPL), 274-294 (DSIILPTLMAITALLNLYFYM), and 325-345 (LLPTMTVLSTMLLPLTPILSI).

It belongs to the complex I subunit 2 family. In terms of assembly, core subunit of respiratory chain NADH dehydrogenase (Complex I) which is composed of 45 different subunits. Interacts with TMEM242.

The protein localises to the mitochondrion inner membrane. It carries out the reaction a ubiquinone + NADH + 5 H(+)(in) = a ubiquinol + NAD(+) + 4 H(+)(out). Its function is as follows. Core subunit of the mitochondrial membrane respiratory chain NADH dehydrogenase (Complex I) which catalyzes electron transfer from NADH through the respiratory chain, using ubiquinone as an electron acceptor. Essential for the catalytic activity and assembly of complex I. This Ovis aries (Sheep) protein is NADH-ubiquinone oxidoreductase chain 2.